Reading from the N-terminus, the 62-residue chain is Large ribosomal subunit protein bL33 (62 aa).

The protein belongs to the bacterial ribosomal protein bL33 family.

The chain is Large ribosomal subunit protein bL33 from Azobacteroides pseudotrichonymphae genomovar. CFP2.